A 132-amino-acid chain; its full sequence is MTINDPIADMLTRVRNANMVRHDKLELPASNIKKEIAEILKSEGFIKNVEYVEDDKQGVIRLFLKYGQNNERVITGLKRISKPGLRVYAKANEVPKVLNGLGIALVSTSEGVVTDKEARKRNIGGEILGYIW.

Belongs to the universal ribosomal protein uS8 family. As to quaternary structure, part of the 30S ribosomal subunit. Contacts proteins S5 and S12.

One of the primary rRNA binding proteins, it binds directly to 16S rRNA central domain where it helps coordinate assembly of the platform of the 30S subunit. The chain is Small ribosomal subunit protein uS8 from Staphylococcus saprophyticus subsp. saprophyticus (strain ATCC 15305 / DSM 20229 / NCIMB 8711 / NCTC 7292 / S-41).